An 88-amino-acid chain; its full sequence is Large ribosomal subunit protein eL37A (88 aa).

Zn(2+)-binding residues include Cys-19, Cys-22, Cys-34, and Cys-37. The C4-type zinc-finger motif lies at 19-37 (CNRCGRRSFHVQKKTCSSC).

It belongs to the eukaryotic ribosomal protein eL37 family. Component of the large ribosomal subunit (LSU). Mature yeast ribosomes consist of a small (40S) and a large (60S) subunit. The 40S small subunit contains 1 molecule of ribosomal RNA (18S rRNA) and 33 different proteins (encoded by 57 genes). The large 60S subunit contains 3 rRNA molecules (25S, 5.8S and 5S rRNA) and 46 different proteins (encoded by 81 genes). Zn(2+) serves as cofactor.

It localises to the cytoplasm. Component of the ribosome, a large ribonucleoprotein complex responsible for the synthesis of proteins in the cell. The small ribosomal subunit (SSU) binds messenger RNAs (mRNAs) and translates the encoded message by selecting cognate aminoacyl-transfer RNA (tRNA) molecules. The large subunit (LSU) contains the ribosomal catalytic site termed the peptidyl transferase center (PTC), which catalyzes the formation of peptide bonds, thereby polymerizing the amino acids delivered by tRNAs into a polypeptide chain. The nascent polypeptides leave the ribosome through a tunnel in the LSU and interact with protein factors that function in enzymatic processing, targeting, and the membrane insertion of nascent chains at the exit of the ribosomal tunnel. The protein is Large ribosomal subunit protein eL37A of Saccharomyces cerevisiae (strain ATCC 204508 / S288c) (Baker's yeast).